Reading from the N-terminus, the 157-residue chain is MATELSLSVQYGVADARLPRWRLRRWVQYALAGAAGDGHAGLAGAELGLRLVGLAEGRRLNREFRGRDYATNVLTFEYGTGPDGVARGDIVVCVPVLAREAREQRKTLLDHAAHLTVHGTLHALGYDHIKAGEARRMEALETVVLARMGIADPYLAA.

His-118, His-122, and His-128 together coordinate Zn(2+).

The protein belongs to the endoribonuclease YbeY family. The cofactor is Zn(2+).

The protein localises to the cytoplasm. Its function is as follows. Single strand-specific metallo-endoribonuclease involved in late-stage 70S ribosome quality control and in maturation of the 3' terminus of the 16S rRNA. This is Endoribonuclease YbeY from Bordetella parapertussis (strain 12822 / ATCC BAA-587 / NCTC 13253).